The primary structure comprises 216 residues: PRA1 family protein B6 (216 aa).

At Ala2 the chain carries N-acetylalanine. Transmembrane regions (helical) follow at residues 83 to 103 (LVAI…FLLA), 105 to 125 (LAAS…LVIG), 135 to 155 (LGIL…GSLL), 159 to 179 (LAVG…EDLF), and 186 to 206 (IGSG…AAAI).

It belongs to the PRA1 family. In terms of assembly, interacts with PRA1B1, PRA1B2, PRA1B3, PRA1B4, PRA1B5 and PRA1E. Expressed in hypocotyls, roots, lateral roots, lateral root caps, columella cells, leaves and stomata.

The protein localises to the endoplasmic reticulum membrane. Functionally, may be involved in both secretory and endocytic intracellular trafficking in the endosomal/prevacuolar compartments. This chain is PRA1 family protein B6 (PRA1B6), found in Arabidopsis thaliana (Mouse-ear cress).